A 309-amino-acid polypeptide reads, in one-letter code: Porphobilinogen deaminase (309 aa).

Cys-242 is subject to S-(dipyrrolylmethanemethyl)cysteine.

Belongs to the HMBS family. In terms of assembly, monomer. Dipyrromethane is required as a cofactor.

The catalysed reaction is 4 porphobilinogen + H2O = hydroxymethylbilane + 4 NH4(+). Its pathway is porphyrin-containing compound metabolism; protoporphyrin-IX biosynthesis; coproporphyrinogen-III from 5-aminolevulinate: step 2/4. Functionally, tetrapolymerization of the monopyrrole PBG into the hydroxymethylbilane pre-uroporphyrinogen in several discrete steps. The protein is Porphobilinogen deaminase of Legionella pneumophila (strain Lens).